The following is an 82-amino-acid chain: Acyl carrier protein (82 aa).

One can recognise a Carrier domain in the interval 3-77; sequence SSIFDKVQNI…QAIEFIQHAI (75 aa). S37 bears the O-(pantetheine 4'-phosphoryl)serine mark.

The protein belongs to the acyl carrier protein (ACP) family. Post-translationally, 4'-phosphopantetheine is transferred from CoA to a specific serine of apo-ACP by AcpS. This modification is essential for activity because fatty acids are bound in thioester linkage to the sulfhydryl of the prosthetic group.

The protein resides in the plastid. It localises to the chloroplast. It participates in lipid metabolism; fatty acid biosynthesis. Its function is as follows. Carrier of the growing fatty acid chain in fatty acid biosynthesis. The chain is Acyl carrier protein from Gracilaria tenuistipitata var. liui (Red alga).